The chain runs to 445 residues: Transcriptional enhancer factor TEF-4 (445 aa).

Disordered stretches follow at residues 1-47 (MGDP…VWSP) and 191-217 (PPASDLPGYEPPPALSPLPPPAPSPPA). The span at 25–37 (EGTGGSEGVGGDG) shows a compositional bias: gly residues. A DNA-binding region (TEA) is located at residues 38-114 (SPDAEGVWSP…QVLARRKSRE (77 aa)). The interval 172-445 (WNVPDVKPFS…QYHIYRLVRD (274 aa)) is transcriptional activation. Positions 199 to 216 (YEPPPALSPLPPPAPSPP) are enriched in pro residues.

Interacts with YAP1 and WWTR1/TAZ. Highest expression in brain. High levels also found in lung, testis and ovarian follicle cells. Lower levels in heart and spleen.

It is found in the nucleus. Transcription factor which plays a key role in the Hippo signaling pathway, a pathway involved in organ size control and tumor suppression by restricting proliferation and promoting apoptosis. The core of this pathway is composed of a kinase cascade wherein MST1/MST2, in complex with its regulatory protein SAV1, phosphorylates and activates LATS1/2 in complex with its regulatory protein MOB1, which in turn phosphorylates and inactivates YAP1 oncoprotein and WWTR1/TAZ. Acts by mediating gene expression of YAP1 and WWTR1/TAZ, thereby regulating cell proliferation, migration and epithelial mesenchymal transition (EMT) induction. Binds to the SPH and GT-IIC 'enhansons' (5'-GTGGAATGT-3'). May be involved in the gene regulation of neural development. Binds to the M-CAT motif. The protein is Transcriptional enhancer factor TEF-4 (Tead2) of Mus musculus (Mouse).